The primary structure comprises 424 residues: Phosphoribosylamine--glycine ligase (424 aa).

An ATP-grasp domain is found at Lys-107 to Glu-313. Residue Val-133–Ser-194 coordinates ATP. Positions 283 and 285 each coordinate Mg(2+).

This sequence belongs to the GARS family. Mg(2+) serves as cofactor. The cofactor is Mn(2+).

The catalysed reaction is 5-phospho-beta-D-ribosylamine + glycine + ATP = N(1)-(5-phospho-beta-D-ribosyl)glycinamide + ADP + phosphate + H(+). The protein operates within purine metabolism; IMP biosynthesis via de novo pathway; N(1)-(5-phospho-D-ribosyl)glycinamide from 5-phospho-alpha-D-ribose 1-diphosphate: step 2/2. The polypeptide is Phosphoribosylamine--glycine ligase (Aquifex aeolicus (strain VF5)).